Here is a 178-residue protein sequence, read N- to C-terminus: Natriuretic and helokinestatin peptides (178 aa).

A signal peptide spans 1-25; sequence MNPRLACSTWLPLLLVLFTLDQGRA. 5 consecutive propeptides follow at residues 26–58, 69–73, 85–89, 103–112, and 123–146; these read NPVE…SEEN, ASDEN, ASEQKGPPFN, and AANE…RNKR. Disordered stretches follow at residues 69-107 and 135-155; these read ASDE…SEQK and RSFE…GCFG. A disulfide bridge links cysteine 153 with cysteine 169.

The protein in the C-terminal section; belongs to the natriuretic peptide family. Expressed by the venom gland.

The protein resides in the secreted. Functionally, helokinestatins antagonize the vasodilatory actions of bradykinin at the B2 bradykinin receptor (BDKRB2), with helokinestatin-1 being the most potent antagonist. In terms of biological role, exhibits hypotensive and vasodepressor activities, possibly by targeting natriuretic peptide receptors NPR1 and NPR2. The chain is Natriuretic and helokinestatin peptides from Heloderma suspectum cinctum (Banded Gila monster).